The sequence spans 210 residues: Dephospho-CoA kinase (210 aa).

The region spanning 4-201 is the DPCK domain; it reads IVALTGGICS…NFYIYLSKQN (198 aa). Residue 12–17 participates in ATP binding; that stretch reads CSGKTT.

This sequence belongs to the CoaE family.

It is found in the cytoplasm. It carries out the reaction 3'-dephospho-CoA + ATP = ADP + CoA + H(+). Its pathway is cofactor biosynthesis; coenzyme A biosynthesis; CoA from (R)-pantothenate: step 5/5. Functionally, catalyzes the phosphorylation of the 3'-hydroxyl group of dephosphocoenzyme A to form coenzyme A. This chain is Dephospho-CoA kinase, found in Buchnera aphidicola subsp. Schizaphis graminum (strain Sg).